The sequence spans 404 residues: Cysteine desulfurase IscS (404 aa).

Pyridoxal 5'-phosphate-binding positions include alanine 75–threonine 76, asparagine 155, glutamine 183, and serine 203–histidine 205. Lysine 206 carries the N6-(pyridoxal phosphate)lysine modification. Threonine 243 contributes to the pyridoxal 5'-phosphate binding site. Cysteine 328 serves as the catalytic Cysteine persulfide intermediate. Residue cysteine 328 coordinates [2Fe-2S] cluster.

This sequence belongs to the class-V pyridoxal-phosphate-dependent aminotransferase family. NifS/IscS subfamily. Homodimer. Forms a heterotetramer with IscU, interacts with other sulfur acceptors. It depends on pyridoxal 5'-phosphate as a cofactor.

It localises to the cytoplasm. It catalyses the reaction (sulfur carrier)-H + L-cysteine = (sulfur carrier)-SH + L-alanine. The protein operates within cofactor biosynthesis; iron-sulfur cluster biosynthesis. Its function is as follows. Master enzyme that delivers sulfur to a number of partners involved in Fe-S cluster assembly, tRNA modification or cofactor biosynthesis. Catalyzes the removal of elemental sulfur atoms from cysteine to produce alanine. Functions as a sulfur delivery protein for Fe-S cluster synthesis onto IscU, an Fe-S scaffold assembly protein, as well as other S acceptor proteins. This chain is Cysteine desulfurase IscS, found in Ectopseudomonas mendocina (strain ymp) (Pseudomonas mendocina).